A 198-amino-acid polypeptide reads, in one-letter code: Protein FAM219B (198 aa).

Disordered regions lie at residues 1-58 (MATA…KRGP) and 83-146 (RRKG…EQVN). Residues Ser-14, Ser-91, Ser-125, and Ser-127 each carry the phosphoserine modification. Polar residues predominate over residues 134–146 (RYSSGYSSAEQVN).

This sequence belongs to the FAM219 family.

This chain is Protein FAM219B (FAM219B), found in Homo sapiens (Human).